The chain runs to 236 residues: Small ribosomal subunit protein uS3 (236 aa).

One can recognise a KH type-2 domain in the interval 39 to 107 (IREFLTEELK…DTSLNIVEVR (69 aa)). The segment at 214–236 (ASERRAVEGDNQGSSSNRRRENA) is disordered.

The protein belongs to the universal ribosomal protein uS3 family. Part of the 30S ribosomal subunit. Forms a tight complex with proteins S10 and S14.

Its function is as follows. Binds the lower part of the 30S subunit head. Binds mRNA in the 70S ribosome, positioning it for translation. This chain is Small ribosomal subunit protein uS3, found in Brucella suis (strain ATCC 23445 / NCTC 10510).